The chain runs to 273 residues: Putative pyruvate, phosphate dikinase regulatory protein (273 aa).

153-160 (GVSRTSKS) contacts ADP.

Belongs to the pyruvate, phosphate/water dikinase regulatory protein family. PDRP subfamily.

It carries out the reaction N(tele)-phospho-L-histidyl/L-threonyl-[pyruvate, phosphate dikinase] + ADP = N(tele)-phospho-L-histidyl/O-phospho-L-threonyl-[pyruvate, phosphate dikinase] + AMP + H(+). The enzyme catalyses N(tele)-phospho-L-histidyl/O-phospho-L-threonyl-[pyruvate, phosphate dikinase] + phosphate + H(+) = N(tele)-phospho-L-histidyl/L-threonyl-[pyruvate, phosphate dikinase] + diphosphate. Its function is as follows. Bifunctional serine/threonine kinase and phosphorylase involved in the regulation of the pyruvate, phosphate dikinase (PPDK) by catalyzing its phosphorylation/dephosphorylation. In Ehrlichia chaffeensis (strain ATCC CRL-10679 / Arkansas), this protein is Putative pyruvate, phosphate dikinase regulatory protein.